The sequence spans 645 residues: Macrolide export ATP-binding/permease protein MacB (645 aa).

The ABC transporter domain occupies 6-244; the sequence is IELEGIRRSY…SSIAVVPWQA (239 aa). Position 42-49 (42-49) interacts with ATP; that stretch reads GASGSGKS. Helical transmembrane passes span 274–294, 526–546, 574–594, and 596–616; these read ALTLSGIVIGVASVVAMMAIG, IAAISMLVGGIGIMNIMLITV, AVVLAAIGGVVGLLLGAVIGV, and AALLFGMTVIFSVTMALGALM.

This sequence belongs to the ABC transporter superfamily. Macrolide exporter (TC 3.A.1.122) family. As to quaternary structure, homodimer.

The protein resides in the cell inner membrane. Its function is as follows. Non-canonical ABC transporter that contains transmembrane domains (TMD), which form a pore in the inner membrane, and an ATP-binding domain (NBD), which is responsible for energy generation. Confers resistance against macrolides. This Nitrobacter winogradskyi (strain ATCC 25391 / DSM 10237 / CIP 104748 / NCIMB 11846 / Nb-255) protein is Macrolide export ATP-binding/permease protein MacB.